Consider the following 393-residue polypeptide: Putative N(4)-(beta-N-acetylglucosaminyl)-L-asparaginase CG1827 (393 aa).

The first 23 residues, 1 to 23 (MRRHLRASLWILCLATMAFSILA), serve as a signal peptide directing secretion. N-linked (GlcNAc...) asparagine glycosylation is found at Asn49 and Asn64. 2 disulfide bridges follow: Cys97–Cys102 and Cys196–Cys212. The active-site Nucleophile is Thr243. Substrate is bound by residues 271-274 (RVGD) and 294-297 (TGDG). A disulfide bridge links Cys354 with Cys381.

Belongs to the Ntn-hydrolase family. As to quaternary structure, heterotetramer of two alpha and two beta chains arranged as a dimer of alpha/beta heterodimers. Cleaved into an alpha and beta chain by autocatalysis; this activates the enzyme. The N-terminal residue of the beta subunit is responsible for the nucleophile hydrolase activity.

It carries out the reaction N(4)-(beta-N-acetyl-D-glucosaminyl)-L-asparagine + H2O = N-acetyl-beta-D-glucosaminylamine + L-aspartate + H(+). Cleaves the GlcNAc-Asn bond which joins oligosaccharides to the peptide of asparagine-linked glycoproteins. The chain is Putative N(4)-(beta-N-acetylglucosaminyl)-L-asparaginase CG1827 from Drosophila melanogaster (Fruit fly).